Here is a 179-residue protein sequence, read N- to C-terminus: Alpha-tubulin N-acetyltransferase (179 aa).

An N-acetyltransferase domain is found at 1–175 (MRVEVVRAPG…NRFVVFDAYF (175 aa)). Residues 109–122 (FYVD…GVGL) and 145–154 (SPKLFAFLKK) each bind acetyl-CoA.

Belongs to the acetyltransferase ATAT1 family.

It catalyses the reaction L-lysyl-[alpha-tubulin] + acetyl-CoA = N(6)-acetyl-L-lysyl-[alpha-tubulin] + CoA + H(+). In terms of biological role, specifically acetylates 'Lys-40' in alpha-tubulin on the lumenal side of microtubules. Promotes microtubule destabilization and accelerates microtubule dynamics; this activity may be independent of acetylation activity. Acetylates alpha-tubulin with a slow enzymatic rate, due to a catalytic site that is not optimized for acetyl transfer. Enters the microtubule through each end and diffuses quickly throughout the lumen of microtubules. Acetylates only long/old microtubules because of its slow acetylation rate since it does not have time to act on dynamically unstable microtubules before the enzyme is released. The sequence is that of Alpha-tubulin N-acetyltransferase from Phytophthora infestans (strain T30-4) (Potato late blight agent).